The chain runs to 97 residues: Co-chaperonin GroES (97 aa).

Belongs to the GroES chaperonin family. As to quaternary structure, heptamer of 7 subunits arranged in a ring. Interacts with the chaperonin GroEL.

The protein resides in the cytoplasm. Together with the chaperonin GroEL, plays an essential role in assisting protein folding. The GroEL-GroES system forms a nano-cage that allows encapsulation of the non-native substrate proteins and provides a physical environment optimized to promote and accelerate protein folding. GroES binds to the apical surface of the GroEL ring, thereby capping the opening of the GroEL channel. The polypeptide is Co-chaperonin GroES (Enterobacter sp. (strain 638)).